An 89-amino-acid polypeptide reads, in one-letter code: MFGFSFRQRKPSSAQTAKERLQILLAHERSSGGSNPDFLPLLQRDILEVVRRHMEIDSDAVDVKLERSDDLSSLEINIELPYAKQLKRA.

Belongs to the MinE family.

In terms of biological role, prevents the cell division inhibition by proteins MinC and MinD at internal division sites while permitting inhibition at polar sites. This ensures cell division at the proper site by restricting the formation of a division septum at the midpoint of the long axis of the cell. This chain is Cell division topological specificity factor, found in Paracoccus denitrificans (strain Pd 1222).